A 317-amino-acid polypeptide reads, in one-letter code: Spore protein CgeB (317 aa).

Its function is as follows. May be involved in maturation of the outermost layer of the spore. May act as a glycosyltransferase that contributes to the glycosylation state of the spore. The chain is Spore protein CgeB from Bacillus subtilis (strain 168).